Here is a 583-residue protein sequence, read N- to C-terminus: Kelch-like protein 35 (583 aa).

The BTB domain maps to 41-119 (TDVVLRAGGR…VYGAGVRLRA (79 aa)). A BACK domain is found at 146-248 (LEGRLRAANS…LEHVRLPLLA (103 aa)). Kelch repeat units follow at residues 301-350 (VIVV…ALRN), 352-394 (VYVS…VVQG), 395-441 (QLFA…SCAG), 443-489 (LFVI…SLED), 490-531 (TIYV…VCDG), and 533-579 (VHIL…TIIQ).

This Homo sapiens (Human) protein is Kelch-like protein 35 (KLHL35).